The sequence spans 151 residues: Small ribosomal subunit protein uS15 (151 aa).

Residues 1 to 20 are disordered; that stretch reads MARLHSGKRGSSGSTRPLRT.

The protein belongs to the universal ribosomal protein uS15 family. As to quaternary structure, part of the 30S ribosomal subunit.

This Methanococcus maripaludis (strain DSM 14266 / JCM 13030 / NBRC 101832 / S2 / LL) protein is Small ribosomal subunit protein uS15.